The sequence spans 201 residues: MDLTLLWVLLPLVTVAWGQYGDYGYSYHQYHDYSDDGWVNLNRQGFSYQCPHGQVVVAVRSIFNKKEGSDRQWNYACMPTPQSLGEPTECWWEEINRAGMEWYQTCSNNGLVAGFQSRYFESVLDREWQFYCCRYSKRCPYSCWLTTEYPGHYGEEMDMISYNYDYYMRGATTTFSAVERDRQWKFIMCRMTDYDCEFANV.

The N-terminal stretch at 1 to 18 is a signal peptide; the sequence is MDLTLLWVLLPLVTVAWG. Gln-19 carries the post-translational modification Pyrrolidone carboxylic acid. The residue at position 23 (Tyr-23) is a Sulfotyrosine. 4 repeat units span residues 26 to 79, 70 to 75, 80 to 135, and 125 to 130. The tract at residues 26–135 is 2 X 53-55 AA tandem repeats; it reads SYHQYHDYSD…REWQFYCCRY (110 aa). 5 disulfides stabilise this stretch: Cys-50/Cys-77, Cys-90/Cys-132, Cys-106/Cys-133, Cys-139/Cys-196, and Cys-143/Cys-189. A 3 X 6 AA tandem repeats of D-R-[EQ]-W-[NQK]-[FY] region spans residues 70 to 186; the sequence is DRQWNYACMP…AVERDRQWKF (117 aa). A sulfotyrosine mark is found at Tyr-162, Tyr-164, Tyr-166, and Tyr-167. The stretch at 181–186 is one 2-3 repeat; that stretch reads DRQWKF. Sulfotyrosine is present on Tyr-194.

Belongs to the dermatopontin family. Interacts with TGFB1, DCN and collagen. In terms of processing, sulfated on tyrosine residue(s). Expressed in skeletal muscle, heart, pancreas, skin and cultured fibroblasts.

It is found in the secreted. The protein resides in the extracellular space. Its subcellular location is the extracellular matrix. Its function is as follows. Seems to mediate adhesion by cell surface integrin binding. May serve as a communication link between the dermal fibroblast cell surface and its extracellular matrix environment. Enhances TGFB1 activity. Inhibits cell proliferation. Accelerates collagen fibril formation, and stabilizes collagen fibrils against low-temperature dissociation. This Bos taurus (Bovine) protein is Dermatopontin (DPT).